Consider the following 446-residue polypeptide: Adenylosuccinate synthetase 1 (446 aa).

GTP contacts are provided by residues 20–26 (GDEGKGK) and 48–50 (GHT). Catalysis depends on D21, which acts as the Proton acceptor. Mg(2+) contacts are provided by D21 and G48. IMP is bound by residues 21-24 (DEGK), 46-49 (NAGH), T137, R151, Q232, T247, and R319. H49 (proton donor) is an active-site residue. 315–321 (SVTGRPR) is a substrate binding site. GTP is bound by residues R321, 347-349 (KLD), and 429-431 (STG).

Belongs to the adenylosuccinate synthetase family. Homodimer. Requires Mg(2+) as cofactor.

The protein resides in the cytoplasm. The enzyme catalyses IMP + L-aspartate + GTP = N(6)-(1,2-dicarboxyethyl)-AMP + GDP + phosphate + 2 H(+). It participates in purine metabolism; AMP biosynthesis via de novo pathway; AMP from IMP: step 1/2. Functionally, plays an important role in the de novo pathway of purine nucleotide biosynthesis. Catalyzes the first committed step in the biosynthesis of AMP from IMP. This chain is Adenylosuccinate synthetase 1, found in Cupriavidus pinatubonensis (strain JMP 134 / LMG 1197) (Cupriavidus necator (strain JMP 134)).